A 430-amino-acid polypeptide reads, in one-letter code: Solanesyl-diphosphate synthase 1, mitochondrial (430 aa).

The N-terminal 31 residues, 1–31 (MSWRWALARRVAALGATSGGGDGATAQAQRL), are a transit peptide targeting the mitochondrion. Residues K133, R136, and H182 each contribute to the isopentenyl diphosphate site. The Mg(2+) site is built by D189 and D193. Position 198 (R198) interacts with an all-trans-polyprenyl diphosphate. An isopentenyl diphosphate-binding site is contributed by R199. Residues K275, T276, Q313, and K330 each contribute to the an all-trans-polyprenyl diphosphate site.

The protein belongs to the FPP/GGPP synthase family. In terms of assembly, homodimer. Mg(2+) is required as a cofactor. As to expression, expressed in leaves, stems and roots. Highest expression in roots.

It localises to the mitochondrion. The enzyme catalyses 7 isopentenyl diphosphate + (2E)-geranyl diphosphate = all-trans-nonaprenyl diphosphate + 7 diphosphate. It functions in the pathway cofactor biosynthesis; ubiquinone biosynthesis. Functionally, involved in the supply of solanesyl diphosphate for ubiquinone-9 (UQ-9) biosynthesis in mitochondria. Farnesyl diphosphate is the preferred substrate. This chain is Solanesyl-diphosphate synthase 1, mitochondrial, found in Oryza sativa subsp. japonica (Rice).